A 298-amino-acid polypeptide reads, in one-letter code: 4-hydroxy-3-methylbut-2-enyl diphosphate reductase (298 aa).

Residue Cys-12 coordinates [4Fe-4S] cluster. His-40 and His-78 together coordinate (2E)-4-hydroxy-3-methylbut-2-enyl diphosphate. Residues His-40 and His-78 each contribute to the dimethylallyl diphosphate site. His-40 and His-78 together coordinate isopentenyl diphosphate. Residue Cys-100 coordinates [4Fe-4S] cluster. (2E)-4-hydroxy-3-methylbut-2-enyl diphosphate is bound at residue His-128. A dimethylallyl diphosphate-binding site is contributed by His-128. His-128 provides a ligand contact to isopentenyl diphosphate. Glu-130 functions as the Proton donor in the catalytic mechanism. Thr-171 contacts (2E)-4-hydroxy-3-methylbut-2-enyl diphosphate. Cys-200 provides a ligand contact to [4Fe-4S] cluster. The (2E)-4-hydroxy-3-methylbut-2-enyl diphosphate site is built by Ser-228, Ser-229, Asn-230, and Ser-270. Residues Ser-228, Ser-229, Asn-230, and Ser-270 each contribute to the dimethylallyl diphosphate site. Positions 228, 229, 230, and 270 each coordinate isopentenyl diphosphate.

Belongs to the IspH family. It depends on [4Fe-4S] cluster as a cofactor.

It catalyses the reaction isopentenyl diphosphate + 2 oxidized [2Fe-2S]-[ferredoxin] + H2O = (2E)-4-hydroxy-3-methylbut-2-enyl diphosphate + 2 reduced [2Fe-2S]-[ferredoxin] + 2 H(+). The catalysed reaction is dimethylallyl diphosphate + 2 oxidized [2Fe-2S]-[ferredoxin] + H2O = (2E)-4-hydroxy-3-methylbut-2-enyl diphosphate + 2 reduced [2Fe-2S]-[ferredoxin] + 2 H(+). The protein operates within isoprenoid biosynthesis; dimethylallyl diphosphate biosynthesis; dimethylallyl diphosphate from (2E)-4-hydroxy-3-methylbutenyl diphosphate: step 1/1. Its pathway is isoprenoid biosynthesis; isopentenyl diphosphate biosynthesis via DXP pathway; isopentenyl diphosphate from 1-deoxy-D-xylulose 5-phosphate: step 6/6. In terms of biological role, catalyzes the conversion of 1-hydroxy-2-methyl-2-(E)-butenyl 4-diphosphate (HMBPP) into a mixture of isopentenyl diphosphate (IPP) and dimethylallyl diphosphate (DMAPP). Acts in the terminal step of the DOXP/MEP pathway for isoprenoid precursor biosynthesis. The sequence is that of 4-hydroxy-3-methylbut-2-enyl diphosphate reductase from Kosmotoga olearia (strain ATCC BAA-1733 / DSM 21960 / TBF 19.5.1).